Here is a 249-residue protein sequence, read N- to C-terminus: 3-deoxy-D-manno-octulosonic acid kinase (249 aa).

D175 is a catalytic residue.

It belongs to the protein kinase superfamily. KdkA/RfaP family.

The protein localises to the cell inner membrane. It carries out the reaction an alpha-Kdo-(2-&gt;6)-lipid IVA + ATP = a 4-O-phospho-alpha-Kdo-(2-&gt;6)-lipid IVA + ADP + H(+). It functions in the pathway bacterial outer membrane biogenesis; LPS core biosynthesis. Its function is as follows. Catalyzes the ATP-dependent phosphorylation of the 3-deoxy-D-manno-octulosonic acid (Kdo) residue in Kdo-lipid IV(A) at the 4-OH position. The sequence is that of 3-deoxy-D-manno-octulosonic acid kinase from Xanthomonas axonopodis pv. citri (strain 306).